The primary structure comprises 262 residues: Granzyme A (262 aa).

The first 26 residues, 1-26, serve as a signal peptide directing secretion; it reads MRNSYRFLASSLSVVVSLLLIPEDVC. The propeptide at 27–28 is activation peptide; that stretch reads EK. One can recognise a Peptidase S1 domain in the interval 29 to 259; it reads IIGGNEVTPH…HLNWIIMTIK (231 aa). Cys54 and Cys70 are oxidised to a cystine. Residues His69 and Asp114 each act as charge relay system in the active site. Intrachain disulfides connect Cys148-Cys218, Cys179-Cys197, and Cys208-Cys234. Asn170 carries an N-linked (GlcNAc...) asparagine glycan. Catalysis depends on Ser212, which acts as the Charge relay system.

Belongs to the peptidase S1 family. Granzyme subfamily. Homodimer; disulfide-linked. Interacts with APEX1.

Its subcellular location is the secreted. It is found in the cytoplasmic granule. It carries out the reaction Hydrolysis of proteins, including fibronectin, type IV collagen and nucleolin. Preferential cleavage: -Arg-|-Xaa-, -Lys-|-Xaa- &gt;&gt; -Phe-|-Xaa- in small molecule substrates.. Abundant protease in the cytosolic granules of cytotoxic T-cells and NK-cells which activates caspase-independent pyroptosis when delivered into the target cell through the immunological synapse. It cleaves after Lys or Arg. Once delivered into the target cell, acts by catalyzing cleavage of gasdermin-B (GSDMB), releasing the pore-forming moiety of GSDMB, thereby triggering pyroptosis and target cell death. Cleaves APEX1 after 'Lys-31' and destroys its oxidative repair activity. Cleaves the nucleosome assembly protein SET after 'Lys-189', which disrupts its nucleosome assembly activity and allows the SET complex to translocate into the nucleus to nick and degrade the DNA. This is Granzyme A from Homo sapiens (Human).